Here is a 169-residue protein sequence, read N- to C-terminus: GTP-dependent dephospho-CoA kinase (169 aa).

Residues Asp-45, Asp-64, Lys-66, and Glu-121 each coordinate GTP.

This sequence belongs to the GTP-dependent DPCK family.

The enzyme catalyses 3'-dephospho-CoA + GTP = GDP + CoA + H(+). The protein operates within cofactor biosynthesis; coenzyme A biosynthesis. Its function is as follows. Catalyzes the GTP-dependent phosphorylation of the 3'-hydroxyl group of dephosphocoenzyme A to form coenzyme A (CoA). This Methanosphaera stadtmanae (strain ATCC 43021 / DSM 3091 / JCM 11832 / MCB-3) protein is GTP-dependent dephospho-CoA kinase.